A 299-amino-acid chain; its full sequence is tRNA dimethylallyltransferase (299 aa).

Residue 8-15 coordinates ATP; that stretch reads GPTASGKT. Substrate is bound at residue 10 to 15; sequence TASGKT. Residues 33-36 are interaction with substrate tRNA; it reads DSQQ.

Belongs to the IPP transferase family. In terms of assembly, monomer. Mg(2+) is required as a cofactor.

It carries out the reaction adenosine(37) in tRNA + dimethylallyl diphosphate = N(6)-dimethylallyladenosine(37) in tRNA + diphosphate. Catalyzes the transfer of a dimethylallyl group onto the adenine at position 37 in tRNAs that read codons beginning with uridine, leading to the formation of N6-(dimethylallyl)adenosine (i(6)A). The polypeptide is tRNA dimethylallyltransferase (Anaeromyxobacter dehalogenans (strain 2CP-C)).